Reading from the N-terminus, the 145-residue chain is Large ribosomal subunit protein uL15 (145 aa).

Residues 1 to 57 (MKLNDLSPAPGSRREKHRPGRGIGSGLGKTGGRGHKGQTSRSGGTIAPGFEGGQQPL) form a disordered region. Residues 21 to 31 (RGIGSGLGKTG) show a composition bias toward gly residues.

Belongs to the universal ribosomal protein uL15 family. As to quaternary structure, part of the 50S ribosomal subunit.

Its function is as follows. Binds to the 23S rRNA. The polypeptide is Large ribosomal subunit protein uL15 (Pseudomonas fluorescens (strain SBW25)).